The primary structure comprises 150 residues: Calmodulin (150 aa).

EF-hand domains lie at 9-44 (EQIA…LGQS), 45-80 (PTAA…KMKD), 82-117 (DNEE…LGER), and 118-150 (LSQE…ISSK). Asp22, Asp24, Asp26, Asn28, Glu33, Asp58, Asp60, Asn62, Thr64, Glu69, Asp95, Asp97, Asn99, Tyr101, Glu106, Asp131, Asp133, Asp135, and Glu142 together coordinate Ca(2+).

This sequence belongs to the calmodulin family. As to quaternary structure, interacts with rng2.

The protein localises to the cytoplasm. It localises to the cytoskeleton. Its subcellular location is the microtubule organizing center. The protein resides in the spindle pole body. Functionally, calmodulin mediates the control of a large number of enzymes, ion channels and other proteins by Ca(2+). Among the enzymes to be stimulated by the calmodulin-Ca(2+) complex are a number of protein kinases and phosphatases. This is Calmodulin (cam1) from Schizosaccharomyces pombe (strain 972 / ATCC 24843) (Fission yeast).